Here is a 113-residue protein sequence, read N- to C-terminus: TYRO protein tyrosine kinase-binding protein (113 aa).

Residues 1 to 27 (MGGLEPCSRLLLLPLLLAVGGLRPVQA) form the signal peptide. Over 28–40 (QAQSDCSCSTVSP) the chain is Extracellular. The chain crosses the membrane as a helical span at residues 41–61 (GVLAGIVLGDLVLTVLIALAV). Ca(2+) is bound at residue Asp50. Over 62 to 113 (YFLGRLVPRGRGAAEAATRKQRITETESPYQELQGQRSDVYSDLNTQRPYYK) the chain is Cytoplasmic. A disordered region spans residues 75 to 113 (AEAATRKQRITETESPYQELQGQRSDVYSDLNTQRPYYK). The region spanning 80–108 (RKQRITETESPYQELQGQRSDVYSDLNTQ) is the ITAM domain. A compositionally biased stretch (polar residues) spans 87–113 (TESPYQELQGQRSDVYSDLNTQRPYYK). Phosphotyrosine occurs at positions 91 and 102.

It belongs to the TYROBP family. In terms of assembly, homodimer; disulfide-linked. Homotrimer; disulfide-linked. Homotetramer; disulfide-linked. Homotrimers and homotetramers form when low levels of partner receptors are available and is competitive with assembly with interacting receptors. They may represent alternative oligomerization states or may be intermediates in the receptor assembly process. Binding of a metal cation aids in homooligomerization through coordination of the metal ion by the subunits of the oligomer. Interacts with TREM1. Interacts with TREM2. Interacts with CLECSF5. Interacts with CD300LB and CD300C2. Interacts with CD300E. Interacts (via ITAM domain) with SYK (via SH2 domains); activates SYK mediating neutrophils and macrophages integrin-mediated activation. Interacts with KLRC2. Interacts with CD300H. Interacts with KLRD1. Following ligand binding by associated receptors, tyrosine phosphorylated in the ITAM domain which leads to activation of additional tyrosine kinases and subsequent cell activation.

The protein resides in the cell membrane. In terms of biological role, adapter protein which non-covalently associates with activating receptors found on the surface of a variety of immune cells to mediate signaling and cell activation following ligand binding by the receptors. TYROBP is tyrosine-phosphorylated in the ITAM domain following ligand binding by the associated receptors which leads to activation of additional tyrosine kinases and subsequent cell activation. Also has an inhibitory role in some cells. Non-covalently associates with activating receptors of the CD300 family to mediate cell activation. Also mediates cell activation through association with activating receptors of the CD200R family. Required for neutrophil activation mediated by integrin. Required for the activation of myeloid cells mediated by the CLEC5A/MDL1 receptor. Associates with natural killer (NK) cell receptors such as the KLRD1/KLRC2 heterodimer to mediate NK cell activation. Associates with TREM1 to mediate activation of neutrophils and monocytes. Associates with TREM2 on monocyte-derived dendritic cells to mediate up-regulation of chemokine receptor CCR7 and dendritic cell maturation and survival. Association with TREM2 mediates cytokine-induced formation of multinucleated giant cells which are formed by the fusion of macrophages. Stabilizes the TREM2 C-terminal fragment (TREM2-CTF) produced by TREM2 ectodomain shedding which suppresses the release of pro-inflammatory cytokines. In microglia, required with TREM2 for phagocytosis of apoptotic neurons. Required with ITGAM/CD11B in microglia to control production of microglial superoxide ions which promote the neuronal apoptosis that occurs during brain development. Promotes pro-inflammatory responses in microglia following nerve injury which accelerates degeneration of injured neurons. Positively regulates the expression of the IRAK3/IRAK-M kinase and IL10 production by liver dendritic cells and inhibits their T cell allosimulatory ability. Negatively regulates B cell proliferation. Required for CSF1-mediated osteoclast cytoskeletal organization. Positively regulates multinucleation during osteoclast development. This chain is TYRO protein tyrosine kinase-binding protein, found in Macaca mulatta (Rhesus macaque).